The primary structure comprises 460 residues: Bifunctional protein GlmU (460 aa).

The segment at 1–229 (MSKLNIVVLA…VWETTGVNSK (229 aa)) is pyrophosphorylase. UDP-N-acetyl-alpha-D-glucosamine contacts are provided by residues 9-12 (LAAG), lysine 23, glutamine 74, 79-80 (GT), 101-103 (YGD), glycine 138, glutamate 154, asparagine 169, and asparagine 227. A Mg(2+)-binding site is contributed by aspartate 103. Asparagine 227 provides a ligand contact to Mg(2+). Residues 230–250 (VQLAGLERIYQTAQANKLLEQ) are linker. Residues 251–460 (GVALADPARI…RPVKKPKPKN (210 aa)) are N-acetyltransferase. Residues arginine 333 and lysine 351 each contribute to the UDP-N-acetyl-alpha-D-glucosamine site. Catalysis depends on histidine 363, which acts as the Proton acceptor. The UDP-N-acetyl-alpha-D-glucosamine site is built by tyrosine 366 and asparagine 377. Residues alanine 380, 386 to 387 (NY), serine 405, alanine 423, and arginine 440 contribute to the acetyl-CoA site.

It in the N-terminal section; belongs to the N-acetylglucosamine-1-phosphate uridyltransferase family. In the C-terminal section; belongs to the transferase hexapeptide repeat family. In terms of assembly, homotrimer. Requires Mg(2+) as cofactor.

The protein resides in the cytoplasm. The enzyme catalyses alpha-D-glucosamine 1-phosphate + acetyl-CoA = N-acetyl-alpha-D-glucosamine 1-phosphate + CoA + H(+). It carries out the reaction N-acetyl-alpha-D-glucosamine 1-phosphate + UTP + H(+) = UDP-N-acetyl-alpha-D-glucosamine + diphosphate. The protein operates within nucleotide-sugar biosynthesis; UDP-N-acetyl-alpha-D-glucosamine biosynthesis; N-acetyl-alpha-D-glucosamine 1-phosphate from alpha-D-glucosamine 6-phosphate (route II): step 2/2. It functions in the pathway nucleotide-sugar biosynthesis; UDP-N-acetyl-alpha-D-glucosamine biosynthesis; UDP-N-acetyl-alpha-D-glucosamine from N-acetyl-alpha-D-glucosamine 1-phosphate: step 1/1. It participates in bacterial outer membrane biogenesis; LPS lipid A biosynthesis. Catalyzes the last two sequential reactions in the de novo biosynthetic pathway for UDP-N-acetylglucosamine (UDP-GlcNAc). The C-terminal domain catalyzes the transfer of acetyl group from acetyl coenzyme A to glucosamine-1-phosphate (GlcN-1-P) to produce N-acetylglucosamine-1-phosphate (GlcNAc-1-P), which is converted into UDP-GlcNAc by the transfer of uridine 5-monophosphate (from uridine 5-triphosphate), a reaction catalyzed by the N-terminal domain. The sequence is that of Bifunctional protein GlmU from Nitrosospira multiformis (strain ATCC 25196 / NCIMB 11849 / C 71).